The primary structure comprises 265 residues: Phosphatidylglycerol--prolipoprotein diacylglyceryl transferase (265 aa).

7 helical membrane-spanning segments follow: residues 11–31 (AVSI…FGFI), 56–76 (MVTW…ILFY), 91–111 (IWHG…AVWL), 120–140 (FLSV…FGRI), 173–193 (QLYE…WFSG), 198–218 (VGAV…AVEF), and 233–253 (WLTM…WLLL). A 1,2-diacyl-sn-glycero-3-phospho-(1'-sn-glycerol) is bound at residue R139.

The protein belongs to the Lgt family.

It localises to the cell inner membrane. The enzyme catalyses L-cysteinyl-[prolipoprotein] + a 1,2-diacyl-sn-glycero-3-phospho-(1'-sn-glycerol) = an S-1,2-diacyl-sn-glyceryl-L-cysteinyl-[prolipoprotein] + sn-glycerol 1-phosphate + H(+). Its pathway is protein modification; lipoprotein biosynthesis (diacylglyceryl transfer). Its function is as follows. Catalyzes the transfer of the diacylglyceryl group from phosphatidylglycerol to the sulfhydryl group of the N-terminal cysteine of a prolipoprotein, the first step in the formation of mature lipoproteins. The chain is Phosphatidylglycerol--prolipoprotein diacylglyceryl transferase from Nitratidesulfovibrio vulgaris (strain DSM 19637 / Miyazaki F) (Desulfovibrio vulgaris).